A 1393-amino-acid polypeptide reads, in one-letter code: DNA-directed RNA polymerase subunit beta' (1393 aa).

Zn(2+) is bound by residues Cys72, Cys74, Cys87, and Cys90. The Mg(2+) site is built by Asp463, Asp465, and Asp467. Zn(2+) contacts are provided by Cys812, Cys887, Cys894, and Cys897.

This sequence belongs to the RNA polymerase beta' chain family. In terms of assembly, the RNAP catalytic core consists of 2 alpha, 1 beta, 1 beta' and 1 omega subunit. When a sigma factor is associated with the core the holoenzyme is formed, which can initiate transcription. Mg(2+) is required as a cofactor. It depends on Zn(2+) as a cofactor.

It carries out the reaction RNA(n) + a ribonucleoside 5'-triphosphate = RNA(n+1) + diphosphate. Its function is as follows. DNA-dependent RNA polymerase catalyzes the transcription of DNA into RNA using the four ribonucleoside triphosphates as substrates. This Chlamydia pneumoniae (Chlamydophila pneumoniae) protein is DNA-directed RNA polymerase subunit beta'.